The primary structure comprises 65 residues: Large ribosomal subunit protein uL30 (65 aa).

Belongs to the universal ribosomal protein uL30 family. In terms of assembly, part of the 50S ribosomal subunit.

In Rickettsia bellii (strain OSU 85-389), this protein is Large ribosomal subunit protein uL30.